The sequence spans 199 residues: uncharacterized protein (199 aa).

4 helical membrane-spanning segments follow: residues 41–61, 72–92, 109–129, and 145–165; these read LFIPPSACRIDLSVFPWAFIC, SLICSPCFSTVWVSLLICSPW, TVWVNLLICSPWAAKVVSIFV, and VTYSVFTGITGLLSLNCLLNL.

It to M.pneumoniae MPN_037.

It localises to the cell membrane. This is an uncharacterized protein from Mycoplasma pneumoniae (strain ATCC 29342 / M129 / Subtype 1) (Mycoplasmoides pneumoniae).